Here is a 402-residue protein sequence, read N- to C-terminus: Apolipoprotein L3 (402 aa).

Belongs to the apolipoprotein L family. As to expression, widely expressed; the highest levels are in prostate, lung and placenta; also detected in kidney, bone marrow, spleen, thymus, spinal cord, adrenal gland, salivary gland, trachea and mammary gland; levels are low in brain, heart, fetal liver, pancreas and testis.

Its subcellular location is the cytoplasm. Its function is as follows. May affect the movement of lipids in the cytoplasm or allow the binding of lipids to organelles. The chain is Apolipoprotein L3 (APOL3) from Homo sapiens (Human).